The chain runs to 66 residues: Large ribosomal subunit protein bL31 (66 aa).

Residues Cys16, Cys18, Cys36, and Cys39 each contribute to the Zn(2+) site.

The protein belongs to the bacterial ribosomal protein bL31 family. Type A subfamily. Part of the 50S ribosomal subunit during exponential growth. The cofactor is Zn(2+).

Binds the 23S rRNA. Functionally, while neither of the L31 paralogs is essential, this protein seems to function as the main L31 protein. Has a lower affinity for 70S ribosomes than the non-zinc-containing paralog L31B (ytiA); is displaced by it to varying extents, even under zinc-replete conditions. The sequence is that of Large ribosomal subunit protein bL31 (rpmE) from Bacillus subtilis (strain 168).